The primary structure comprises 128 residues: NADH dehydrogenase [ubiquinone] 1 beta subcomplex subunit 6 (128 aa).

T2 carries the post-translational modification N-acetylthreonine. The residue at position 24 (K24) is an N6-acetyllysine. The chain crosses the membrane as a helical span at residues 68 to 86; it reads SIFVFTHVLVPVWIIHYYM.

This sequence belongs to the complex I NDUFB6 subunit family. In terms of assembly, complex I is composed of 45 different subunits.

It localises to the mitochondrion inner membrane. In terms of biological role, accessory subunit of the mitochondrial membrane respiratory chain NADH dehydrogenase (Complex I), that is believed not to be involved in catalysis. Complex I functions in the transfer of electrons from NADH to the respiratory chain. The immediate electron acceptor for the enzyme is believed to be ubiquinone. The polypeptide is NADH dehydrogenase [ubiquinone] 1 beta subcomplex subunit 6 (NDUFB6) (Pan troglodytes (Chimpanzee)).